A 227-amino-acid polypeptide reads, in one-letter code: MSTSLSVTELQVENFTFPPTVKPPGSTKTLFLGGAGERGLEIQGKFIKFTAIGVYLEDSAVNCLGVKWKGKSAVELTESVEFFRDVVTGDFEKFIRVTMILPLTGQQYSEKVSENCVAIWKSLGIYTDAEAKAIEKFIEVFKDENFPPGSSILFTISGQGSLTIGFSKDSSVPEGGKVVIENKLLANSVLESVIGKNGVSPAAKESLASRLSPLFNDCGADSEKPQS.

Thr50, Asn115, and Ser192 together coordinate substrate.

This sequence belongs to the chalcone isomerase family. Fibers.

It catalyses the reaction a chalcone = a flavanone.. It participates in secondary metabolite biosynthesis; flavonoid biosynthesis. Catalyzes the intramolecular cyclization of bicyclic chalcones into tricyclic (S)-flavanones. Responsible for the isomerization of 4,2',4',6'-tetrahydroxychalcone (also termed chalcone) into naringenin. This Gossypium hirsutum (Upland cotton) protein is Chalcone--flavanone isomerase (CHI).